Consider the following 623-residue polypeptide: Lamin-B2.L (623 aa).

Positions 1-18 (MATTTPSRSTRSSMQSPA) are enriched in low complexity. Positions 1–30 (MATTTPSRSTRSSMQSPARGTSTPLSPTRI) are disordered. The head stretch occupies residues 2-27 (ATTTPSRSTRSSMQSPARGTSTPLSP). Residues 19–30 (RGTSTPLSPTRI) are compositionally biased toward polar residues. Ser-26 carries the post-translational modification Phosphoserine. A coil 1A region spans residues 28–64 (TRISRLQEKEELRHLNDRLAVYIDRVRALELENDRLM). In terms of domain architecture, IF rod spans 35 to 391 (EKEELRHLND…KLLEGEEERL (357 aa)). The segment at 64–74 (MVKISEKEEVT) is linker 1. Residues 75–211 (TREVSGIKNL…QSLQEEMDFR (137 aa)) form a coil 1B region. The interval 212 to 235 (KNIYEEESRETRKRHERRIVEVDR) is linker 2. Residues 236 to 378 (GHHYDYESKL…VKLALDLEIN (143 aa)) are coil 2. Residues 380–592 (YRKLLEGEEE…VTKSVLRNVE (213 aa)) are tail. Disordered stretches follow at residues 388–473 (EERL…LSQQ) and 591–623 (VEEE…CSVM). At Ser-396 the chain carries Phosphoserine. Over residues 398–416 (ESRVTVSRATSSSSSATRT) the composition is skewed to low complexity. Positions 420 to 425 (KRRRVE) match the Nuclear localization signal motif. Over residues 443 to 473 (LGSSRITASEGSSRTITSGQSSTTRFHLSQQ) the composition is skewed to polar residues. The LTD domain maps to 468–585 (FHLSQQASAT…EEVAVRTVTK (118 aa)). Residues 592–604 (EEEEDEDADFGEE) show a composition bias toward acidic residues. The segment covering 612-623 (DPRTTSRGCSVM) has biased composition (polar residues). The residue at position 620 (Cys-620) is a Cysteine methyl ester. Cys-620 carries the S-farnesyl cysteine lipid modification. A propeptide spans 621–623 (SVM) (removed in mature form).

The protein belongs to the intermediate filament family. In terms of processing, phosphorylation plays a key role in lamin organization, subcellular localization and nuclear envelope disintegration. Phosphorylation by CDK1 at Ser-26 at the onset of mitosis drives lamin disassembly and nuclear envelope breakdown.

It localises to the nucleus lamina. It is found in the nucleus envelope. The protein resides in the nucleus. The protein localises to the nucleoplasm. Its subcellular location is the nucleus matrix. Functionally, lamins are intermediate filament proteins that assemble into a filamentous meshwork, and which constitute the major components of the nuclear lamina, a fibrous layer on the nucleoplasmic side of the inner nuclear membrane. Lamins provide a framework for the nuclear envelope, bridging the nuclear envelope and chromatin, thereby playing an important role in nuclear assembly, chromatin organization, nuclear membrane and telomere dynamics. The structural integrity of the lamina is strictly controlled by the cell cycle, as seen by the disintegration and formation of the nuclear envelope in prophase and telophase, respectively. In Xenopus laevis (African clawed frog), this protein is Lamin-B2.L (lmnb2.L).